Here is a 202-residue protein sequence, read N- to C-terminus: Imidazoleglycerol-phosphate dehydratase (202 aa).

It belongs to the imidazoleglycerol-phosphate dehydratase family.

The protein resides in the cytoplasm. The enzyme catalyses D-erythro-1-(imidazol-4-yl)glycerol 3-phosphate = 3-(imidazol-4-yl)-2-oxopropyl phosphate + H2O. It participates in amino-acid biosynthesis; L-histidine biosynthesis; L-histidine from 5-phospho-alpha-D-ribose 1-diphosphate: step 6/9. This Lactococcus lactis subsp. cremoris (strain SK11) protein is Imidazoleglycerol-phosphate dehydratase.